Here is a 164-residue protein sequence, read N- to C-terminus: Transcription elongation factor GreA (164 aa).

Residues 50-76 (YHAAREEQGQQEARIRQLQELLNNAKV) adopt a coiled-coil conformation.

Belongs to the GreA/GreB family.

Necessary for efficient RNA polymerase transcription elongation past template-encoded arresting sites. The arresting sites in DNA have the property of trapping a certain fraction of elongating RNA polymerases that pass through, resulting in locked ternary complexes. Cleavage of the nascent transcript by cleavage factors such as GreA or GreB allows the resumption of elongation from the new 3'terminus. GreA releases sequences of 2 to 3 nucleotides. The polypeptide is Transcription elongation factor GreA (Mycobacteroides abscessus (strain ATCC 19977 / DSM 44196 / CCUG 20993 / CIP 104536 / JCM 13569 / NCTC 13031 / TMC 1543 / L948) (Mycobacterium abscessus)).